Here is a 289-residue protein sequence, read N- to C-terminus: Orotidine 5'-phosphate decarboxylase (289 aa).

The active-site Proton donor is K97.

This sequence belongs to the OMP decarboxylase family. Type 2 subfamily.

The catalysed reaction is orotidine 5'-phosphate + H(+) = UMP + CO2. Its pathway is pyrimidine metabolism; UMP biosynthesis via de novo pathway; UMP from orotate: step 2/2. The chain is Orotidine 5'-phosphate decarboxylase from Petrotoga mobilis (strain DSM 10674 / SJ95).